The primary structure comprises 159 residues: Major allergen Pyr c 1 (159 aa).

It belongs to the BetVI family.

This is Major allergen Pyr c 1 (PYRC1) from Pyrus communis (Pear).